Consider the following 157-residue polypeptide: Glycine-rich RNA-binding, abscisic acid-inducible protein (157 aa).

Residues 8–86 (YRCFVGGLAW…RNITVNQAQS (79 aa)) form the RRM domain. The interval 82–157 (NQAQSRGGGG…YGGGGGGWRD (76 aa)) is disordered. Positions 87–157 (RGGGGGGGGY…YGGGGGGWRD (71 aa)) are enriched in gly residues.

In terms of biological role, possibly has a role in RNA transcription or processing during stress. This is Glycine-rich RNA-binding, abscisic acid-inducible protein (RAB15) from Zea mays (Maize).